The chain runs to 664 residues: Cyclic nucleotide-gated channel alpha-2 (664 aa).

A compositionally biased stretch (polar residues) spans 1–20; it reads MTEKSNGVKSSPANNHNNHV. The tract at residues 1 to 49 is disordered; sequence MTEKSNGVKSSPANNHNNHVPATIKANGKDESRTRSRPQSAADDDTSSE. Residues 1 to 144 are Cytoplasmic-facing; sequence MTEKSNGVKS…PAGDWYYRWL (144 aa). A helical transmembrane segment spans residues 145 to 166; sequence FVIAMPVLYNWCLLVARACFSD. Residues 167 to 176 are Extracellular-facing; that stretch reads LQRGYFLVWL. A helical membrane pass occupies residues 177-197; that stretch reads VLDYFSDVVYIADLFIRLRTG. Topologically, residues 198 to 222 are cytoplasmic; it reads FLEQGLLVKDPKKLRDNYIHTLQFK. A helical membrane pass occupies residues 223 to 241; the sequence is LDVASIIPTDLIYFAVGIH. The Extracellular segment spans residues 242-246; sequence NPELR. The helical transmembrane segment at 247–265 threads the bilayer; the sequence is FNRLLHFARMFEFFDRTET. Topologically, residues 266-272 are cytoplasmic; it reads RTSYPNI. Residues 270–378 form an ion conduction pathway region; the sequence is PNIFRISNLV…GNVGSMISNM (109 aa). A helical transmembrane segment spans residues 273–296; it reads FRISNLVLYILVIIHWNACIYYAI. Residues 297–319 are Extracellular-facing; it reads SKSIGFGVDTWVYPNITDPEYGY. Helical transmembrane passes span 320–354 and 355–379; these read LARE…LFVI and FDFL…SNMN. A selectivity filter region spans residues 337–340; sequence TIGE. The interval 380-456 is C-linker; that stretch reads ATRAEFQAKI…STLKKVRIFQ (77 aa). The Cytoplasmic portion of the chain corresponds to 380-664; sequence ATRAEFQAKI…SPEPAAAEQP (285 aa). Residues 460 to 580 are cyclic nucleotide-binding domain; that stretch reads AGLLVELVLK…EERGREILMK (121 aa). The 3',5'-cyclic GMP site is built by Gly-520, Ser-523, Arg-536, and Thr-537. Residues Arg-536 and Thr-537 each contribute to the 3',5'-cyclic AMP site. Positions 597–651 form a coiled coil; the sequence is VQEKLKQLETNMETLYTRFGRLLAEYTGAQQKLKQRITVLEVKMKQNTEDDYLSD. Positions 644-664 are disordered; it reads TEDDYLSDGMNSPEPAAAEQP.

Belongs to the cyclic nucleotide-gated cation channel (TC 1.A.1.5) family. CNGA2 subfamily. In terms of assembly, the olfactory cyclic nucleotide-gated channel is an heterotetramer composed of CNGA2, CNGA4 and CNGB1b subunits with 2:1:1 stoichiometry.

It localises to the cell projection. Its subcellular location is the cilium membrane. The enzyme catalyses Ca(2+)(in) = Ca(2+)(out). The catalysed reaction is Na(+)(in) = Na(+)(out). It catalyses the reaction K(+)(in) = K(+)(out). It carries out the reaction NH4(+)(in) = NH4(+)(out). The enzyme catalyses Rb(+)(in) = Rb(+)(out). The catalysed reaction is Li(+)(in) = Li(+)(out). It catalyses the reaction Cs(+)(in) = Cs(+)(out). Its function is as follows. Pore-forming subunit of the olfactory cyclic nucleotide-gated channel. Operates in the cilia of olfactory sensory neurons where chemical stimulation of the odorant is converted to an electrical signal. Mediates odorant-induced cAMP-dependent Ca(2+) influx triggering neuron depolarization. The rise of intracellular Ca(2+) levels potentiates the olfactory response by activating Ca(2+)-dependent Cl(-) channels, but it also serves as a negative feedback signal to desensitize the channel for rapid adaptation to odorants. Conducts cAMP- and cGMP-gated ion currents, with permeability for monovalent and divalent cations. The sequence is that of Cyclic nucleotide-gated channel alpha-2 from Oryctolagus cuniculus (Rabbit).